The following is a 296-amino-acid chain: 4-hydroxybenzoate octaprenyltransferase (296 aa).

8 helical membrane-spanning segments follow: residues 28-48 (PIGIYLLLWPTLTAVWIAGLG), 52-72 (LANVLIFGLGVVLMRAAGCCI), 102-122 (ALALFGILVAVSFLLVLCTNS), 145-167 (TYYPQVVLGAAYSWGIPMAFTAA), 174-196 (SAWLLYIANLLWTVGYDTYYAMV), 219-239 (MIILTLQMLSLGCLLLAGSRF), 241-261 (LGGWFHLGLLGAALCFAWEYW), and 275-295 (FLHNHWAGLLVFMGVVLDYAL).

This sequence belongs to the UbiA prenyltransferase family. Requires Mg(2+) as cofactor.

The protein localises to the cell inner membrane. It carries out the reaction all-trans-octaprenyl diphosphate + 4-hydroxybenzoate = 4-hydroxy-3-(all-trans-octaprenyl)benzoate + diphosphate. Its pathway is cofactor biosynthesis; ubiquinone biosynthesis. Catalyzes the prenylation of para-hydroxybenzoate (PHB) with an all-trans polyprenyl group. Mediates the second step in the final reaction sequence of ubiquinone-8 (UQ-8) biosynthesis, which is the condensation of the polyisoprenoid side chain with PHB, generating the first membrane-bound Q intermediate 3-octaprenyl-4-hydroxybenzoate. The protein is 4-hydroxybenzoate octaprenyltransferase of Pseudomonas putida (strain W619).